A 453-amino-acid chain; its full sequence is Charged multivesicular body protein 7 (453 aa).

The interval 1 to 22 (MWSPEREAEAPAGGDPAGLLPP) is disordered. Residues 10 to 22 (APAGGDPAGLLPP) are compositionally biased toward low complexity. S232 carries the phosphoserine modification. Residues 243 to 312 (QLMQSEQLLS…DTVQGILDRI (70 aa)) are a coiled coil. The segment covering 392–403 (TKEPLDLPDNPR) has biased composition (basic and acidic residues). 2 disordered regions span residues 392-417 (TKEPLDLPDNPRNRHFTNSVPNPRIS) and 431-453 (SEGGLVPSSKSPKRQLEPTLKPL). Phosphothreonine is present on T408. A phosphoserine mark is found at S410, S417, S431, and S441.

Belongs to the SNF7 family. As to quaternary structure, interacts with CHMP4B, but not with VPS25. Interacts with LEMD2 (via C-terminus).

It is found in the cytoplasm. It localises to the nucleus envelope. ESCRT-III-like protein required to recruit the ESCRT-III complex to the nuclear envelope (NE) during late anaphase. Together with SPAST, the ESCRT-III complex promotes NE sealing and mitotic spindle disassembly during late anaphase. Recruited to the reforming NE during anaphase by LEMD2. Plays a role in the endosomal sorting pathway. This Homo sapiens (Human) protein is Charged multivesicular body protein 7 (CHMP7).